We begin with the raw amino-acid sequence, 159 residues long: Protein SPA, chloroplastic (159 aa).

Residues 1 to 47 (MLTAPSLSRFKSPFISSPLKLPTLSSSFFTQKFHQTCRRRNSYPCIK) constitute a chloroplast transit peptide. A helical membrane pass occupies residues 56–76 (VIAITVGVLSVAIGVGIPVFY). Residues 85-145 (KRENTQPCFP…TCTTCQGSGI (61 aa)) are CR-type-like. CXXCXGXG motif repeat units lie at residues 92-99 (CFPCTGTG), 103-110 (CRFCMGTG), 126-133 (CINCDGAG), and 137-144 (CTTCQGSG).

Expressed in source leaves. Lower levels of expression in fruits and stems.

It is found in the plastid. Its subcellular location is the chloroplast thylakoid membrane. Functionally, participates in determining harvest index (HI) by affecting source-sink carbon distribution. Up-regulates the conversion of fixed carbon to exportable sugars. The sequence is that of Protein SPA, chloroplastic from Solanum lycopersicum (Tomato).